The primary structure comprises 249 residues: Beta-crystallin B1 (249 aa).

The interval 1–49 (MSQPAVKASATAAVNPGPDGKGKGAPPPGPAPGSGPAQAPAQPMPAAKG) is disordered. Position 2 is an N-acetylserine (Ser2). Residues 2–55 (SQPAVKASATAAVNPGPDGKGKGAPPPGPAPGSGPAQAPAQPMPAAKGDLPPGS) form an N-terminal arm region. A compositionally biased stretch (low complexity) spans 34 to 49 (SGPAQAPAQPMPAAKG). Beta/gamma crystallin 'Greek key' domains are found at residues 56–95 (YKLVVFEQENFQGRRVEFSGECLNLGDRGFDRVRSIIVTS) and 96–140 (GPWV…RPIR). Residues 141 to 145 (MDAQE) are connecting peptide. Beta/gamma crystallin 'Greek key' domains follow at residues 146–187 (HKLC…RVSS) and 188–230 (GTWV…RRLR). The segment at 232–249 (RQWHREGCFPVLAAEPPK) is C-terminal arm.

This sequence belongs to the beta/gamma-crystallin family. In terms of assembly, homo/heterodimer, or complexes of higher-order. The structure of beta-crystallin oligomers seems to be stabilized through interactions between the N-terminal arms. Specific cleavages in the N-terminal arm occur during lens maturation and give rise to truncated forms, leading to impaired oligomerization and protein insolubilization.

Functionally, crystallins are the dominant structural components of the vertebrate eye lens. The chain is Beta-crystallin B1 (CRYBB1) from Sus scrofa (Pig).